Reading from the N-terminus, the 130-residue chain is Transcription antitermination protein NusB (130 aa).

This sequence belongs to the NusB family.

Its function is as follows. Involved in transcription antitermination. Required for transcription of ribosomal RNA (rRNA) genes. Binds specifically to the boxA antiterminator sequence of the ribosomal RNA (rrn) operons. The chain is Transcription antitermination protein NusB from Sulfurovum sp. (strain NBC37-1).